The following is a 378-amino-acid chain: SWI/SNF-related matrix-associated actin-dependent regulator of chromatin subfamily B member 1 (378 aa).

The interval Met1–Ser106 is DNA-binding.

This sequence belongs to the SNF5 family. In terms of assembly, component of the multiprotein chromatin-remodeling complexes SWI/SNF. Component of neural progenitors-specific chromatin remodeling complex (npBAF complex) and the neuron-specific chromatin remodeling complex (nBAF complex). Component of the BAF (SWI/SNF) chromatin remodeling complex. Component of the SWI/SNF-B (PBAF) chromatin remodeling complex. Binds to double-stranded DNA.

The protein localises to the nucleus. Functionally, involved in chromatin-remodeling. Core component of the BAF (SWI/SNF) complex. This ATP-dependent chromatin-remodeling complex plays important roles in cell proliferation and differentiation, in cellular antiviral activities and inhibition of tumor formation. Belongs to the neural progenitors-specific chromatin remodeling complex (npBAF complex) and the neuron-specific chromatin remodeling complex (nBAF complex) and may play a role in neural development. This chain is SWI/SNF-related matrix-associated actin-dependent regulator of chromatin subfamily B member 1 (smarcb1), found in Xenopus tropicalis (Western clawed frog).